Reading from the N-terminus, the 685-residue chain is Serotransferrin (685 aa).

The first 16 residues, 1-16 (MKPLLLLPLLGCLATI), serve as a signal peptide directing secretion. Transferrin-like domains follow at residues 23-329 (VKWC…ALKI) and 340-666 (MKWC…SLRT). An intrachain disulfide couples Cys-26 to Cys-48. Residues Asp-72 and Tyr-102 each contribute to the Fe(3+) site. 3 cysteine pairs are disulfide-bonded: Cys-125/Cys-206, Cys-170/Cys-184, and Cys-234/Cys-248. Residues Thr-127, Lys-131, Ala-133, and Gly-134 each coordinate hydrogencarbonate. Residue Tyr-200 coordinates Fe(3+). A Fe(3+)-binding site is contributed by His-256. 2 disulfide bridges follow: Cys-343-Cys-379 and Cys-353-Cys-370. Fe(3+) is bound by residues Asp-394 and Tyr-428. Intrachain disulfides connect Cys-404–Cys-678, Cys-419–Cys-639, Cys-451–Cys-526, Cys-475–Cys-667, Cys-485–Cys-499, Cys-496–Cys-509, and Cys-566–Cys-580. Hydrogencarbonate is bound by residues Thr-453, Arg-457, Ala-459, and Gly-460. The N-linked (GlcNAc...) asparagine glycan is linked to Asn-476. Tyr-520 lines the Fe(3+) pocket. Position 588 (His-588) interacts with Fe(3+).

Belongs to the transferrin family. In terms of assembly, monomer.

The protein resides in the secreted. Functionally, transferrins are iron binding transport proteins which can bind two Fe(3+) ions in association with the binding of an anion, usually bicarbonate. The polypeptide is Serotransferrin (tf) (Paralichthys olivaceus (Bastard halibut)).